Here is a 507-residue protein sequence, read N- to C-terminus: Chromosomal replication initiator protein DnaA (507 aa).

The tract at residues 1–87 (MSVELWQQCV…IGSKRSSAPR (87 aa)) is domain I, interacts with DnaA modulators. The segment covering 85–110 (APRAAPNAPLAAAQVSQAQANAAPAS) has biased composition (low complexity). A disordered region spans residues 85–158 (APRAAPNAPL…QQAPVRAEQR (74 aa)). A domain II region spans residues 87-170 (RAAPNAPLAA…QVEGALKHTS (84 aa)). Residues 126–140 (QKTEEISEEPSRDSF) are compositionally biased toward basic and acidic residues. A domain III, AAA+ region region spans residues 171 to 387 (YLNRTFTFEN…GALKRVIAHS (217 aa)). 4 residues coordinate ATP: glycine 215, glycine 217, lysine 218, and threonine 219. Residues 388–507 (HFMGRDITIE…YKNLLRTLTT (120 aa)) form a domain IV, binds dsDNA region.

The protein belongs to the DnaA family. In terms of assembly, oligomerizes as a right-handed, spiral filament on DNA at oriC.

Its subcellular location is the cytoplasm. Plays an essential role in the initiation and regulation of chromosomal replication. ATP-DnaA binds to the origin of replication (oriC) to initiate formation of the DNA replication initiation complex once per cell cycle. Binds the DnaA box (a 9 base pair repeat at the origin) and separates the double-stranded (ds)DNA. Forms a right-handed helical filament on oriC DNA; dsDNA binds to the exterior of the filament while single-stranded (ss)DNA is stabiized in the filament's interior. The ATP-DnaA-oriC complex binds and stabilizes one strand of the AT-rich DNA unwinding element (DUE), permitting loading of DNA polymerase. After initiation quickly degrades to an ADP-DnaA complex that is not apt for DNA replication. Binds acidic phospholipids. The chain is Chromosomal replication initiator protein DnaA from Pseudomonas fluorescens (strain Pf0-1).